We begin with the raw amino-acid sequence, 145 residues long: Brain and acute leukemia cytoplasmic protein (145 aa).

Glycine 2 carries N-myristoyl glycine lipidation. A lipid anchor (S-palmitoyl cysteine) is attached at cysteine 3. The tract at residues 3–35 (CGGSRADAIEPRYYESWTRETESTWLTYTDSDA) is interaction with CAMK2A. The tract at residues 27 to 120 (WLTYTDSDAP…KRDAKRTSAK (94 aa)) is disordered. Polar residues predominate over residues 83–106 (CGTQCPNPQSLGSGPLTQKQNGLR). The segment covering 108–119 (TEAKRDAKRTSA) has biased composition (basic and acidic residues).

Interacts with CAMK2A. Post-translationally, palmitoylation and myristoylation target the protein to the lipid rafts. As to expression, expressed in the brain.

The protein localises to the cytoplasm. The protein resides in the synapse. It localises to the synaptosome. It is found in the membrane raft. Its subcellular location is the postsynaptic density. In terms of biological role, may play a synaptic role at the postsynaptic lipid rafts possibly through interaction with CAMK2A. This is Brain and acute leukemia cytoplasmic protein (BAALC) from Sus scrofa (Pig).